The chain runs to 440 residues: D-serine dehydratase (440 aa).

Position 116 is an N6-(pyridoxal phosphate)lysine (K116).

The protein belongs to the serine/threonine dehydratase family. DsdA subfamily. As to quaternary structure, monomer. Pyridoxal 5'-phosphate serves as cofactor.

It carries out the reaction D-serine = pyruvate + NH4(+). In Salmonella arizonae (strain ATCC BAA-731 / CDC346-86 / RSK2980), this protein is D-serine dehydratase.